Consider the following 727-residue polypeptide: Translation initiation factor IF-2, mitochondrial (727 aa).

The transit peptide at 1–29 (MNQKLLKLENLLRFHTICRQVHSPSQRRL) directs the protein to the mitochondrion. Residues 178-346 (PRSPVVTVMG…ATIALAEILE (169 aa)) enclose the tr-type G domain. The G1 stretch occupies residues 187 to 194 (GHVDHGKT). Residue 187-194 (GHVDHGKT) coordinates GTP. Positions 212 to 216 (GITQH) are G2. GTP is bound by residues 234–237 (DTPG) and 288–291 (NKCD). The interval 234-237 (DTPG) is G3. The segment at 288–291 (NKCD) is G4. Residues 324–326 (SAL) are G5. Thr688 is subject to Phosphothreonine.

The protein belongs to the TRAFAC class translation factor GTPase superfamily. Classic translation factor GTPase family. IF-2 subfamily. In terms of assembly, monomer.

The protein resides in the mitochondrion. In terms of biological role, one of the essential components for the initiation of protein synthesis. Protects formylmethionyl-tRNA from spontaneous hydrolysis and promotes its binding to the 30S ribosomal subunits. Also involved in the hydrolysis of GTP during the formation of the 70S ribosomal complex. In Mus musculus (Mouse), this protein is Translation initiation factor IF-2, mitochondrial (Mtif2).